The following is a 382-amino-acid chain: D-galactonate dehydratase (382 aa).

Residue D183 coordinates Mg(2+). The Proton donor role is filled by H185. 2 residues coordinate Mg(2+): E209 and E235. H285 functions as the Proton acceptor in the catalytic mechanism.

This sequence belongs to the mandelate racemase/muconate lactonizing enzyme family. GalD subfamily. Mg(2+) serves as cofactor.

The enzyme catalyses D-galactonate = 2-dehydro-3-deoxy-D-galactonate + H2O. It functions in the pathway carbohydrate acid metabolism; D-galactonate degradation; D-glyceraldehyde 3-phosphate and pyruvate from D-galactonate: step 1/3. In terms of biological role, catalyzes the dehydration of D-galactonate to 2-keto-3-deoxy-D-galactonate. The chain is D-galactonate dehydratase from Salmonella dublin (strain CT_02021853).